The sequence spans 356 residues: tRNA N6-adenosine threonylcarbamoyltransferase (356 aa).

Positions 116 and 120 each coordinate Fe cation. Substrate is bound by residues 139–143, Asp-174, Gly-187, Asp-191, and Asn-281; that span reads IVSGG. Asp-309 contributes to the Fe cation binding site.

This sequence belongs to the KAE1 / TsaD family. Requires Fe(2+) as cofactor.

The protein localises to the cytoplasm. The catalysed reaction is L-threonylcarbamoyladenylate + adenosine(37) in tRNA = N(6)-L-threonylcarbamoyladenosine(37) in tRNA + AMP + H(+). Functionally, required for the formation of a threonylcarbamoyl group on adenosine at position 37 (t(6)A37) in tRNAs that read codons beginning with adenine. Is involved in the transfer of the threonylcarbamoyl moiety of threonylcarbamoyl-AMP (TC-AMP) to the N6 group of A37, together with TsaE and TsaB. TsaD likely plays a direct catalytic role in this reaction. The polypeptide is tRNA N6-adenosine threonylcarbamoyltransferase (Frankia casuarinae (strain DSM 45818 / CECT 9043 / HFP020203 / CcI3)).